The primary structure comprises 305 residues: THAP domain-containing protein 11 (305 aa).

The segment at 1–80 (MPGFTCCVPG…TYTVRVPTIF (80 aa)) adopts a THAP-type zinc-finger fold. Positions 85–135 (VNERKVARRPAGAAAARRRQQQQQQQQQQQQQQQLQQQQPSPSSSTAQTTQ) are disordered. Residues 105–135 (QQQQQQQQQQQQQQLQQQQPSPSSSTAQTTQ) show a composition bias toward low complexity. The short motif at 234 to 237 (DHSY) is the HCFC1-binding motif (HBM) element. The stretch at 246 to 296 (EELLRKLNEQRDILALMEVKMKEMKGSIRHLRLTEAKLREELREKDRLLAM) forms a coiled coil.

The protein belongs to the THAP11 family. As to quaternary structure, forms homodimers. Interacts via HBM with HCFC1. Forms a complex with HCFC1 and ZNF143. In terms of tissue distribution, mainly expressed in embryonic pluripotent cells. In adult tissues, expressed in oocytes and in certain regions of the brain,including hippocampus, olfactory bulb and Purkinje cells.

The protein resides in the nucleus. It is found in the cytoplasm. In terms of biological role, transcriptional repressor that plays a central role for embryogenesis and the pluripotency of embryonic stem (ES) cells. Sequence-specific DNA-binding factor that represses gene expression in pluripotent ES cells by directly binding to key genetic loci and recruiting epigenetic modifiers. Required for normal brain development and neural precursor differentiation. Its function is as follows. Transcription factor, which has both transcriptional activation and repression activities. Also modulates chromatin accessibility. In complex with HCFC1 and ZNF143, regulates the expression of several genes, including AP2S1, ESCO2, OPHN1, RBL1, UBXN8 and ZNF32. May regulate the expression of genes that encode both cytoplasmic and mitochondrial ribosomal proteins. Required for normal mitochondrial development and function. Regulates mitochondrial gene expression, including that of components of the electron transport chain. Involved in the maintainance of pluripotency in early embryonic cells, possibly through its action on mitochondrial maturation which is required to meet high energy demands of these cells. Required for early development of retina, preventing premature exit of retinal progenitor cells from the cell cycle. This effect may also be mediated by its action on mitochondria. Through the regulation of MMACHC gene expression, controls cobalamin metabolism. Required for normal brain development and neural precursor differentiation. Involved in cell growth. The protein is THAP domain-containing protein 11 (Thap11) of Mus musculus (Mouse).